We begin with the raw amino-acid sequence, 263 residues long: Acetylglutamate kinase (263 aa).

Substrate-binding positions include 48–49 (GG), R70, and N162.

The protein belongs to the acetylglutamate kinase family. ArgB subfamily.

The protein resides in the cytoplasm. The catalysed reaction is N-acetyl-L-glutamate + ATP = N-acetyl-L-glutamyl 5-phosphate + ADP. The protein operates within amino-acid biosynthesis; L-arginine biosynthesis; N(2)-acetyl-L-ornithine from L-glutamate: step 2/4. Functionally, catalyzes the ATP-dependent phosphorylation of N-acetyl-L-glutamate. The chain is Acetylglutamate kinase from Vibrio vulnificus (strain CMCP6).